Consider the following 130-residue polypeptide: Riboflavin kinase (130 aa).

Residue 10-15 coordinates CDP; sequence GFGEGK. Mg(2+) is bound by residues T39 and N41. The FMN site is built by T96 and E104. Residue 109–112 coordinates CDP; sequence VNLR.

This sequence belongs to the archaeal riboflavin kinase family. It depends on Mg(2+) as a cofactor.

It catalyses the reaction riboflavin + CTP = CDP + FMN + H(+). Its pathway is cofactor biosynthesis; FMN biosynthesis; FMN from riboflavin (CTP route): step 1/1. Catalyzes the CTP-dependent phosphorylation of riboflavin (vitamin B2) to form flavin mononucleotide (FMN). The sequence is that of Riboflavin kinase from Methanococcus vannielii (strain ATCC 35089 / DSM 1224 / JCM 13029 / OCM 148 / SB).